A 524-amino-acid polypeptide reads, in one-letter code: Secologanin synthase 1 (524 aa).

Topologically, residues 1–11 (MEMDMDTIRKA) are lumenal. A helical membrane pass occupies residues 12-32 (IAATIFALVMAWAWRVLDWAW). The Cytoplasmic segment spans residues 33–524 (FTPKRIEKRL…SHVIYKKLES (492 aa)). Residue Cys-470 participates in heme binding.

The protein belongs to the cytochrome P450 family. Heme serves as cofactor. As to expression, upper and lower leaf epidermis.

The protein localises to the endoplasmic reticulum membrane. It carries out the reaction loganin + reduced [NADPH--hemoprotein reductase] + O2 = secologanin + oxidized [NADPH--hemoprotein reductase] + 2 H2O + H(+). The enzyme catalyses secologanin + reduced [NADPH--hemoprotein reductase] + O2 = secoxyloganin + oxidized [NADPH--hemoprotein reductase] + H2O + 2 H(+). It functions in the pathway alkaloid biosynthesis; secologanin biosynthesis. Functionally, component of the seco-iridoid and derivatives monoterpenoid indole alkaloids (MIAs, e.g. secologanin) biosynthesis pathway. Catalyzes the conversion of loganin into secologanin. Catalyzes the conversion of secologanin into secoxyloganin. The sequence is that of Secologanin synthase 1 from Catharanthus roseus (Madagascar periwinkle).